Consider the following 771-residue polypeptide: Probable aconitate hydratase, mitochondrial (771 aa).

Substrate is bound by residues Gln-86 and Asp-179–His-181. [4Fe-4S] cluster contacts are provided by Cys-372, Cys-435, and Cys-438. Residues Arg-461, Arg-466, Arg-594, and Ser-657–Arg-658 contribute to the substrate site.

This sequence belongs to the aconitase/IPM isomerase family. In terms of assembly, monomer. The cofactor is [4Fe-4S] cluster.

The protein localises to the mitochondrion. The enzyme catalyses citrate = D-threo-isocitrate. The protein operates within carbohydrate metabolism; tricarboxylic acid cycle; isocitrate from oxaloacetate: step 2/2. Catalyzes the isomerization of citrate to isocitrate via cis-aconitate. The polypeptide is Probable aconitate hydratase, mitochondrial (aco2) (Dictyostelium discoideum (Social amoeba)).